A 360-amino-acid polypeptide reads, in one-letter code: Histidinol-phosphate aminotransferase (360 aa).

An N6-(pyridoxal phosphate)lysine modification is found at Lys223.

This sequence belongs to the class-II pyridoxal-phosphate-dependent aminotransferase family. Histidinol-phosphate aminotransferase subfamily. Homodimer. Pyridoxal 5'-phosphate is required as a cofactor.

It carries out the reaction L-histidinol phosphate + 2-oxoglutarate = 3-(imidazol-4-yl)-2-oxopropyl phosphate + L-glutamate. The protein operates within amino-acid biosynthesis; L-histidine biosynthesis; L-histidine from 5-phospho-alpha-D-ribose 1-diphosphate: step 7/9. In Bacillus subtilis (strain 168), this protein is Histidinol-phosphate aminotransferase (hisC).